The primary structure comprises 363 residues: G-protein coupled receptor 78 (363 aa).

The Extracellular portion of the chain corresponds to 1–7 (MGPGEAL). A helical membrane pass occupies residues 8–28 (LAGLLVMVLAVALLSNALVLL). At 29 to 47 (CCAYSAELRTRASGVLLVN) the chain is on the cytoplasmic side. A helical transmembrane segment spans residues 48–68 (LSLGHLLLAALDMPFTLLGVM). Over 69–80 (RGRTPSAPGACQ) the chain is Extracellular. A disulfide bond links Cys-79 and Cys-156. The chain crosses the membrane as a helical span at residues 81 to 101 (VIGFLDTFLASNAALSVAALS). The Cytoplasmic portion of the chain corresponds to 102–122 (ADQWLAVGFPLRYAGRLRPRY). A helical membrane pass occupies residues 123 to 143 (AGLLLGCAWGQSLAFSGAALG). Residues 144–168 (CSWLGYSSAFASCSLRLPPEPERPR) are Extracellular-facing. Residues 169–189 (FAAFTATLHAVGFVLPLAVLC) traverse the membrane as a helical segment. Residues 190–242 (LTSLQVHRVARRHCQRMDTVTMKALALLADLHPSVRQRCLIQQKRRRHRATRK) are Cytoplasmic-facing. Residues 243–263 (IGIAIATFLICFAPYVMTRLA) traverse the membrane as a helical segment. Over 264–277 (ELVPFVTVNAQWGI) the chain is Extracellular. A helical membrane pass occupies residues 278-297 (LSKCLTYSKAVADPFTYSLL). At 298–363 (RRPFRQVLAG…ENDSCLQQTH (66 aa)) the chain is on the cytoplasmic side. The segment at 340 to 363 (TPRPASTHNGSVDTENDSCLQQTH) is disordered. The span at 343-363 (PASTHNGSVDTENDSCLQQTH) shows a compositional bias: polar residues.

It belongs to the G-protein coupled receptor 1 family. High level of expression in placenta. Expressed throughout the brain at low level. No expression detected in skeletal muscle, lung, heart, liver, pancreas, or kidney.

Its subcellular location is the cell membrane. In terms of biological role, orphan receptor. Displays a significant level of constitutive activity. Its effect is mediated by G(s)-alpha protein that stimulate adenylate cyclase, resulting in an elevation of intracellular cAMP. This is G-protein coupled receptor 78 (GPR78) from Homo sapiens (Human).